We begin with the raw amino-acid sequence, 369 residues long: Mycofactocin maturase MftC (369 aa).

The Radical SAM core domain occupies Leu-16–Ser-232. Residues Cys-30, Cys-34, Cys-37, Cys-251, Cys-258, Cys-269, Cys-310, Cys-313, Cys-319, Cys-323, and Cys-341 each contribute to the [4Fe-4S] cluster site. Residues Ala-347–Glu-369 are disordered. Over residues Gln-352–Glu-369 the composition is skewed to basic and acidic residues.

The protein belongs to the radical SAM superfamily. MftC family. Interacts with MftB. It depends on [4Fe-4S] cluster as a cofactor.

It carries out the reaction [mycofactocin precursor peptide]-C-terminal glycyl-L-valyl-L-tyrosine + S-adenosyl-L-methionine = [mycofactocin precursor peptide]-C-terminal glycyl-N-{[2-(4-hydroxyphenyl)ethenyl]-3-methylbutanamide} + 5'-deoxyadenosine + L-methionine + CO2. It catalyses the reaction [mycofactocin precursor peptide]-C-terminal glycyl-N-{[2-(4-hydroxyphenyl)ethenyl]-3-methylbutanamide} + AH2 + S-adenosyl-L-methionine = [mycofactocin precursor peptide]-C-terminal glycyl-N-{5-[(4-hydroxyphenyl)methyl]-4,4-dimethyl-2-oxopyrrolidin-3-yl}acetamide + 5'-deoxyadenosine + L-methionine + A + H(+). Functionally, radical S-adenosylmethionine (SAM) enzyme responsible for the first step of the biosynthesis of the enzyme cofactor mycofactocin (MFT). Catalyzes two reactions at the C-terminus of the mycofactocin precursor (the MftA peptide). The first one is the oxidative decarboxylation of the C-terminal L-tyrosine of MftA, forming an unsaturated tyramine moiety. The second reaction is the cross-linking of the tyramine with the penultimate L-valine residue, forming a five-membered lactam ring. Its activity requires the presence of the MftB chaperone. The protein is Mycofactocin maturase MftC of Mycobacterium ulcerans (strain Agy99).